The chain runs to 275 residues: Release factor glutamine methyltransferase (275 aa).

S-adenosyl-L-methionine contacts are provided by residues 117–121, Asp-140, Trp-168, and Asn-182; that span reads GTGSG. 182–185 is a binding site for substrate; it reads NPPY.

It belongs to the protein N5-glutamine methyltransferase family. PrmC subfamily.

It carries out the reaction L-glutaminyl-[peptide chain release factor] + S-adenosyl-L-methionine = N(5)-methyl-L-glutaminyl-[peptide chain release factor] + S-adenosyl-L-homocysteine + H(+). Methylates the class 1 translation termination release factors RF1/PrfA and RF2/PrfB on the glutamine residue of the universally conserved GGQ motif. The sequence is that of Release factor glutamine methyltransferase from Buchnera aphidicola subsp. Schizaphis graminum (strain Sg).